The chain runs to 314 residues: MSSRPVFLSAADVQDHLRSSSLLIAPLETALANFSSGPDGGVVQPVRTVVPVAKHRGFLGVMPAYSAAEDALTTKLVTFYEDHSATSTVPSHQATVLLFQPSNGSLLAVMDGNVITAKRTAAVSAIATKFLKPPNSEVLCILGAGVQAYSHYEVFTEQFFFKEVRIWNRTKENAEKFVNTVPGEVRICSSVQEAVTGADVIITVTMATEPILFGEWVKPGAHINAIGASRPDWRELDDELMKQAVLYVDSQEAALKESGDVLLSGAEIFAELGEVVKGVKPAHCEKTTVFKSLGMAVEDMVAAKLVYDSWSSGK.

Arginine 47 lines the 3,3',5-triiodo-L-thyronine pocket. NADPH is bound by residues serine 91, histidine 92, arginine 119, alanine 144, valine 146, glutamine 147, asparagine 168, arginine 169, threonine 170, asparagine 173, threonine 205, and methionine 206. Residue glutamate 257 participates in 3,3',5-triiodo-L-thyronine binding. Serine 292 serves as a coordination point for NADPH.

The protein belongs to the ornithine cyclodeaminase/mu-crystallin family. As to quaternary structure, homodimer. Binds the thyroid hormone triiodothyronine (T3); T3 binding inhibits enzymatic activity.

Its subcellular location is the cytoplasm. It catalyses the reaction L-pipecolate + NAD(+) = Delta(1)-piperideine-2-carboxylate + NADH + H(+). The enzyme catalyses L-pipecolate + NADP(+) = Delta(1)-piperideine-2-carboxylate + NADPH + H(+). The catalysed reaction is L-proline + NADP(+) = 1-pyrroline-2-carboxylate + NADPH + H(+). It carries out the reaction L-proline + NAD(+) = 1-pyrroline-2-carboxylate + NADH + H(+). It catalyses the reaction (3R)-1,4-thiomorpholine-3-carboxylate + NAD(+) = 3,4-dehydrothiomorpholine-3-carboxylate + NADH + 2 H(+). The enzyme catalyses (3R)-1,4-thiomorpholine-3-carboxylate + NADP(+) = 3,4-dehydrothiomorpholine-3-carboxylate + NADPH + 2 H(+). The catalysed reaction is (S)-cystathionine ketimine + NADH + 2 H(+) = (3R,5S)-2,3,5,6,7-pentahydro-1,4-thiazepine-3,5-dicarboxylate + NAD(+). It carries out the reaction (S)-cystathionine ketimine + NADPH + 2 H(+) = (3R,5S)-2,3,5,6,7-pentahydro-1,4-thiazepine-3,5-dicarboxylate + NADP(+). It catalyses the reaction (R)-lanthionine ketimine + NADPH + 2 H(+) = (3R,5R)-1,4-thiomorpholine-3,5-dicarboxylate + NADP(+). The enzyme catalyses Delta(2)-thiazoline-2-carboxylate + NADPH + 2 H(+) = L-thiazolidine-2-carboxylate + NADP(+). In terms of biological role, catalyzes the NAD(P)H-dependent reduction of imine double bonds of a number of cyclic ketimine substrates, including sulfur-containing cyclic ketimines. Under physiological conditions, it efficiently catalyzes delta(1)-piperideine-2-carboxylate (P2C) and delta(1)-pyrroline-2-carboxylate (Pyr2C) reduction, suggesting a central role in lysine and glutamate metabolism. Additional substrates are (S)-cystathionine ketimine (CysK), 3,4-dehydrothiomorpholine-3-carboxylate (AECK), and (R)-lanthionine ketimine (LK) that is reduced at very low rate compared to other substrates. Also catalyzes the NAD(P)H-dependent reduction of delta(2)-thiazoline-2-carboxylate (T2C). The sequence is that of Ketimine reductase mu-crystallin (CRYM) from Bos taurus (Bovine).